The chain runs to 288 residues: Prepilin leader peptidase/N-methyltransferase (288 aa).

The helical transmembrane segment at 14–34 (FITLATVLGLLVGSFLNVVVY) threads the bilayer. Positions 71, 74, 96, and 99 each coordinate Zn(2+). Transmembrane regions (helical) follow at residues 103 to 123 (ISVR…VVAW), 127 to 147 (ASVE…LSLI), 158 to 178 (IVLP…WVPL), 182 to 202 (VCGA…FKLV), 227 to 247 (VLPL…VYLL), and 254 to 274 (MGTA…AVLW).

The protein belongs to the peptidase A24 family. Requires Zn(2+) as cofactor.

Its subcellular location is the cell inner membrane. It carries out the reaction Typically cleaves a -Gly-|-Phe- bond to release an N-terminal, basic peptide of 5-8 residues from type IV prepilin, and then N-methylates the new N-terminal amino group, the methyl donor being S-adenosyl-L-methionine.. Functionally, plays an essential role in type IV pili and type II pseudopili formation by proteolytically removing the leader sequence from substrate proteins and subsequently monomethylating the alpha-amino group of the newly exposed N-terminal phenylalanine. This Pseudomonas putida (Arthrobacter siderocapsulatus) protein is Prepilin leader peptidase/N-methyltransferase (pilD).